Here is a 357-residue protein sequence, read N- to C-terminus: 3-isopropylmalate dehydrogenase (357 aa).

76 to 89 (GPQWDTIDPSLRPE) is an NAD(+) binding site. Substrate contacts are provided by R96, R106, R134, and D224. Mg(2+)-binding residues include D224, D248, and D252. 282-294 (GSAPDIAGKGIAN) serves as a coordination point for NAD(+).

Belongs to the isocitrate and isopropylmalate dehydrogenases family. LeuB type 1 subfamily. As to quaternary structure, homodimer. Mg(2+) is required as a cofactor. Mn(2+) serves as cofactor.

It is found in the cytoplasm. The catalysed reaction is (2R,3S)-3-isopropylmalate + NAD(+) = 4-methyl-2-oxopentanoate + CO2 + NADH. Its pathway is amino-acid biosynthesis; L-leucine biosynthesis; L-leucine from 3-methyl-2-oxobutanoate: step 3/4. In terms of biological role, catalyzes the oxidation of 3-carboxy-2-hydroxy-4-methylpentanoate (3-isopropylmalate) to 3-carboxy-4-methyl-2-oxopentanoate. The product decarboxylates to 4-methyl-2 oxopentanoate. The sequence is that of 3-isopropylmalate dehydrogenase from Xanthomonas euvesicatoria pv. vesicatoria (strain 85-10) (Xanthomonas campestris pv. vesicatoria).